The chain runs to 111 residues: Nucleoid-associated protein Fphi_0115 (111 aa).

The tract at residues 1–27 is disordered; the sequence is MNFDMSKLMQQAQKMQEQMKKAQQERE. The segment covering 17-27 has biased composition (basic and acidic residues); the sequence is EQMKKAQQERE.

The protein belongs to the YbaB/EbfC family. As to quaternary structure, homodimer.

It localises to the cytoplasm. The protein resides in the nucleoid. Functionally, binds to DNA and alters its conformation. May be involved in regulation of gene expression, nucleoid organization and DNA protection. This is Nucleoid-associated protein Fphi_0115 from Francisella philomiragia subsp. philomiragia (strain ATCC 25017 / CCUG 19701 / FSC 153 / O#319-036).